The sequence spans 356 residues: 3-dehydroquinate synthase (356 aa).

NAD(+)-binding positions include Gly106–Asp110, Thr130–Thr131, Lys143, and Lys152. Positions 185, 248, and 265 each coordinate Zn(2+).

The protein belongs to the sugar phosphate cyclases superfamily. Dehydroquinate synthase family. NAD(+) is required as a cofactor. It depends on Co(2+) as a cofactor. Requires Zn(2+) as cofactor.

It localises to the cytoplasm. The enzyme catalyses 7-phospho-2-dehydro-3-deoxy-D-arabino-heptonate = 3-dehydroquinate + phosphate. The protein operates within metabolic intermediate biosynthesis; chorismate biosynthesis; chorismate from D-erythrose 4-phosphate and phosphoenolpyruvate: step 2/7. Its function is as follows. Catalyzes the conversion of 3-deoxy-D-arabino-heptulosonate 7-phosphate (DAHP) to dehydroquinate (DHQ). The protein is 3-dehydroquinate synthase of Caldanaerobacter subterraneus subsp. tengcongensis (strain DSM 15242 / JCM 11007 / NBRC 100824 / MB4) (Thermoanaerobacter tengcongensis).